Consider the following 240-residue polypeptide: Large ribosomal subunit protein uL2 (240 aa).

The segment covering 1–11 has biased composition (polar residues); that stretch reads MGKRLISQNRG. Disordered regions lie at residues 1 to 31 and 206 to 240; these read MGKR…VKYR and GGGR…TGRK. Composition is skewed to basic residues over residues 13–28 and 224–240; these read GTPK…KGAV and SPGR…TGRK.

The protein belongs to the universal ribosomal protein uL2 family. In terms of assembly, part of the 50S ribosomal subunit. Forms a bridge to the 30S subunit in the 70S ribosome.

One of the primary rRNA binding proteins. Required for association of the 30S and 50S subunits to form the 70S ribosome, for tRNA binding and peptide bond formation. It has been suggested to have peptidyltransferase activity; this is somewhat controversial. Makes several contacts with the 16S rRNA in the 70S ribosome. In Methanococcus maripaludis (strain C6 / ATCC BAA-1332), this protein is Large ribosomal subunit protein uL2.